Here is a 212-residue protein sequence, read N- to C-terminus: Translation initiation factor IF-3 (212 aa).

Belongs to the IF-3 family. As to quaternary structure, monomer.

Its subcellular location is the cytoplasm. Functionally, IF-3 binds to the 30S ribosomal subunit and shifts the equilibrium between 70S ribosomes and their 50S and 30S subunits in favor of the free subunits, thus enhancing the availability of 30S subunits on which protein synthesis initiation begins. In Synechococcus sp. (strain CC9311), this protein is Translation initiation factor IF-3.